A 248-amino-acid chain; its full sequence is D-xylose 1-dehydrogenase (248 aa).

D42, D68, N91, Y156, K160, V189, and T191 together coordinate NAD(+). Y156 serves as the catalytic Proton acceptor.

It belongs to the short-chain dehydrogenases/reductases (SDR) family.

It carries out the reaction D-xylose + NAD(+) = D-xylono-1,5-lactone + NADH + H(+). Involved in the degradation of D-xylose. Catalyzes the initial reaction in the xylose utilization pathway by oxydizing D-xylose into D-xylonolactone. Shows some activity with L-arabinose and D-lyxose, but D-xylose is clearly the best substrate. Has no activity with D-ribose, D-glucose, D-galactose or D-mannose. The polypeptide is D-xylose 1-dehydrogenase (Caulobacter vibrioides (strain ATCC 19089 / CIP 103742 / CB 15) (Caulobacter crescentus)).